The chain runs to 241 residues: Folate receptor alpha (241 aa).

Positions 1 to 19 (MAWQMTQLLLLALVAAAWG) are cleaved as a signal peptide. 8 cysteine pairs are disulfide-bonded: cysteine 36-cysteine 64, cysteine 56-cysteine 104, cysteine 65-cysteine 108, cysteine 88-cysteine 174, cysteine 95-cysteine 145, cysteine 134-cysteine 208, cysteine 138-cysteine 188, and cysteine 151-cysteine 168. An N-linked (GlcNAc...) asparagine glycan is attached at asparagine 68. Folate is bound by residues aspartate 102, tyrosine 106, 123–127 (WRKER), 156–161 (HKGWNW), and serine 195. A glycan (N-linked (GlcNAc...) asparagine) is linked at asparagine 160. Serine 234 carries GPI-anchor amidated serine lipidation. The propeptide at 235–241 (GSTPQGI) is removed in mature form.

It belongs to the folate receptor family. Post-translationally, the secreted form is derived from the membrane-bound form either by cleavage of the GPI anchor, or/and by proteolysis catalyzed by a metalloprotease. As to expression, detected in milk (at protein level).

The protein localises to the cell membrane. It localises to the apical cell membrane. Its subcellular location is the basolateral cell membrane. The protein resides in the secreted. It is found in the cytoplasmic vesicle. The protein localises to the clathrin-coated vesicle. It localises to the endosome. Functionally, binds to folate and reduced folic acid derivatives and mediates delivery of 5-methyltetrahydrofolate and folate analogs into the interior of cells. Has high affinity for folate and folic acid analogs at neutral pH. Exposure to slightly acidic pH after receptor endocytosis triggers a conformation change that strongly reduces its affinity for folates and mediates their release. Required for normal embryonic development and normal cell proliferation. This chain is Folate receptor alpha (FOLR1), found in Bos taurus (Bovine).